Consider the following 318-residue polypeptide: Na(+)-translocating ferredoxin:NAD(+) oxidoreductase complex subunit D (318 aa).

The next 3 membrane-spanning stretches (helical) occupy residues 35–55 (LAVA…ICVI), 77–99 (WSAV…WWIG), and 114–134 (FGGL…FLLA). Residue Thr156 is modified to FMN phosphoryl threonine. The next 3 helical transmembrane spans lie at 182–202 (VYGC…LYLI), 206–226 (IISW…ALLV), and 261–281 (IIYA…GGYP).

It belongs to the NqrB/RnfD family. As to quaternary structure, the complex is composed of six subunits: RnfA, RnfB, RnfC, RnfD, RnfE and RnfG. The cofactor is FMN.

It is found in the cell membrane. It carries out the reaction 2 reduced [2Fe-2S]-[ferredoxin] + Na(+)(in) + NAD(+) + H(+) = 2 oxidized [2Fe-2S]-[ferredoxin] + Na(+)(out) + NADH. Its function is as follows. Part of a membrane-bound complex that couples electron transfer with translocation of ions across the membrane. Couples electron transfer from reduced ferredoxin to NAD(+) with electrogenic movement of Na(+) out of the cell. Involved in caffeate respiration. The sequence is that of Na(+)-translocating ferredoxin:NAD(+) oxidoreductase complex subunit D from Acetobacterium woodii (strain ATCC 29683 / DSM 1030 / JCM 2381 / KCTC 1655 / WB1).